The following is a 254-amino-acid chain: tRNA (guanine-N(7)-)-methyltransferase (254 aa).

Positions 1–11 (MSISDNSREEL) are enriched in basic and acidic residues. Positions 1–25 (MSISDNSREELGELPAGRPLQSEFN) are disordered. Residues Glu83, Glu108, Asp135, and Asp158 each contribute to the S-adenosyl-L-methionine site. Asp158 is a catalytic residue. Lys162 serves as a coordination point for substrate. An interaction with RNA region spans residues 164–169 (RHNKRR). Residues Asp194 and 232–235 (TKFE) contribute to the substrate site.

Belongs to the class I-like SAM-binding methyltransferase superfamily. TrmB family.

The catalysed reaction is guanosine(46) in tRNA + S-adenosyl-L-methionine = N(7)-methylguanosine(46) in tRNA + S-adenosyl-L-homocysteine. Its pathway is tRNA modification; N(7)-methylguanine-tRNA biosynthesis. In terms of biological role, catalyzes the formation of N(7)-methylguanine at position 46 (m7G46) in tRNA. This Corynebacterium efficiens (strain DSM 44549 / YS-314 / AJ 12310 / JCM 11189 / NBRC 100395) protein is tRNA (guanine-N(7)-)-methyltransferase.